Reading from the N-terminus, the 95-residue chain is Co-chaperonin GroES (95 aa).

It belongs to the GroES chaperonin family. As to quaternary structure, heptamer of 7 subunits arranged in a ring. Interacts with the chaperonin GroEL.

It is found in the cytoplasm. Functionally, together with the chaperonin GroEL, plays an essential role in assisting protein folding. The GroEL-GroES system forms a nano-cage that allows encapsulation of the non-native substrate proteins and provides a physical environment optimized to promote and accelerate protein folding. GroES binds to the apical surface of the GroEL ring, thereby capping the opening of the GroEL channel. The chain is Co-chaperonin GroES from Cereibacter sphaeroides (strain ATCC 17025 / ATH 2.4.3) (Rhodobacter sphaeroides).